We begin with the raw amino-acid sequence, 54 residues long: Potassium channel toxin alpha-KTx 14.x (54 aa).

Positions 1–23 are cleaved as a signal peptide; it reads MKIFFAILLILAVCSMAIWTVNG. 3 disulfides stabilise this stretch: cysteine 30-cysteine 46, cysteine 36-cysteine 51, and cysteine 40-cysteine 53.

It belongs to the short scorpion toxin superfamily. Potassium channel inhibitor family. Alpha-KTx 14 subfamily. Expressed by the venom gland.

Its subcellular location is the secreted. Potassium channels inhibitor. The polypeptide is Potassium channel toxin alpha-KTx 14.x (Olivierus martensii (Manchurian scorpion)).